A 192-amino-acid polypeptide reads, in one-letter code: Xanthine phosphoribosyltransferase (192 aa).

L20 and N27 together coordinate xanthine. 128-132 (ANGQA) provides a ligand contact to 5-phospho-alpha-D-ribose 1-diphosphate. K156 contributes to the xanthine binding site.

It belongs to the purine/pyrimidine phosphoribosyltransferase family. Xpt subfamily. As to quaternary structure, homodimer.

Its subcellular location is the cytoplasm. The catalysed reaction is XMP + diphosphate = xanthine + 5-phospho-alpha-D-ribose 1-diphosphate. Its pathway is purine metabolism; XMP biosynthesis via salvage pathway; XMP from xanthine: step 1/1. Its function is as follows. Converts the preformed base xanthine, a product of nucleic acid breakdown, to xanthosine 5'-monophosphate (XMP), so it can be reused for RNA or DNA synthesis. This Listeria innocua serovar 6a (strain ATCC BAA-680 / CLIP 11262) protein is Xanthine phosphoribosyltransferase.